The primary structure comprises 273 residues: Putative phosphoenolpyruvate synthase regulatory protein (273 aa).

153 to 160 (AVSRAGKT) contacts ADP.

It belongs to the pyruvate, phosphate/water dikinase regulatory protein family. PSRP subfamily.

It catalyses the reaction [pyruvate, water dikinase] + ADP = [pyruvate, water dikinase]-phosphate + AMP + H(+). The enzyme catalyses [pyruvate, water dikinase]-phosphate + phosphate + H(+) = [pyruvate, water dikinase] + diphosphate. Its function is as follows. Bifunctional serine/threonine kinase and phosphorylase involved in the regulation of the phosphoenolpyruvate synthase (PEPS) by catalyzing its phosphorylation/dephosphorylation. In Stenotrophomonas maltophilia (strain K279a), this protein is Putative phosphoenolpyruvate synthase regulatory protein.